The following is a 516-amino-acid chain: Golgin-84 (516 aa).

The Cytoplasmic segment spans residues 1–492; that stretch reads MSSWITGLAD…TFLRRYPMMR (492 aa). The interval 28-80 is disordered; the sequence is QTENATGSADPMRRSMTSSTQSLSTSLKSTLSPVRRSGANSSSSVKSDGGVSV. The segment covering 42 to 80 has biased composition (low complexity); it reads SMTSSTQSLSTSLKSTLSPVRRSGANSSSSVKSDGGVSV. Residues Ser64 and Ser74 each carry the phosphoserine modification. Positions 108 to 423 form a coiled coil; it reads TNELAAFKIA…KAQTQLQQNM (316 aa). A helical; Anchor for type IV membrane protein membrane pass occupies residues 493-513; sequence VSVIVYVALLHLWVMFVLLST. Over 514 to 516 the chain is Lumenal; it reads TPN.

It is found in the golgi apparatus membrane. May be involved in maintaining Golgi structure and in intra-Golgi transport. This chain is Golgin-84 (Golgin84), found in Drosophila melanogaster (Fruit fly).